Here is a 393-residue protein sequence, read N- to C-terminus: Formate-dependent phosphoribosylglycinamide formyltransferase (393 aa).

Residues 22-23 and E82 contribute to the N(1)-(5-phospho-beta-D-ribosyl)glycinamide site; that span reads EL. Residues R114, K155, 160-165, 195-198, and E203 each bind ATP; these read SSGKGQ and ESFV. Residues 119 to 308 enclose the ATP-grasp domain; it reads RLAAEELGLR…EFALHVRAVL (190 aa). Residues E267 and E279 each contribute to the Mg(2+) site. N(1)-(5-phospho-beta-D-ribosyl)glycinamide-binding positions include D286, K356, and 363–364; that span reads RR.

This sequence belongs to the PurK/PurT family. Homodimer.

It catalyses the reaction N(1)-(5-phospho-beta-D-ribosyl)glycinamide + formate + ATP = N(2)-formyl-N(1)-(5-phospho-beta-D-ribosyl)glycinamide + ADP + phosphate + H(+). It participates in purine metabolism; IMP biosynthesis via de novo pathway; N(2)-formyl-N(1)-(5-phospho-D-ribosyl)glycinamide from N(1)-(5-phospho-D-ribosyl)glycinamide (formate route): step 1/1. Its function is as follows. Involved in the de novo purine biosynthesis. Catalyzes the transfer of formate to 5-phospho-ribosyl-glycinamide (GAR), producing 5-phospho-ribosyl-N-formylglycinamide (FGAR). Formate is provided by PurU via hydrolysis of 10-formyl-tetrahydrofolate. This is Formate-dependent phosphoribosylglycinamide formyltransferase from Oleidesulfovibrio alaskensis (strain ATCC BAA-1058 / DSM 17464 / G20) (Desulfovibrio alaskensis).